The primary structure comprises 168 residues: Gastrula zinc finger protein XlCGF42.1 (168 aa).

6 consecutive C2H2-type zinc fingers follow at residues 6 to 28, 34 to 56, 62 to 84, 90 to 112, 118 to 140, and 146 to 165; these read YSCS…RKSH, FCCS…YRTH, CICS…QKYH, FSCS…LRIH, YTCT…LRIH, and FTCS…DRHH.

This sequence belongs to the krueppel C2H2-type zinc-finger protein family.

Its subcellular location is the nucleus. In terms of biological role, may be involved in transcriptional regulation. This chain is Gastrula zinc finger protein XlCGF42.1, found in Xenopus laevis (African clawed frog).